A 684-amino-acid chain; its full sequence is Endo-1,4-beta-xylanase A (684 aa).

A signal peptide spans 1-34 (MMRSLKSRKLVFILAMLFLINAIVSLKFITYSSA). 2 CBM-cenC domains span residues 40 to 190 (KSKY…IKDL) and 193 to 342 (AYVL…ISDE). The GH10 domain occupies 350–678 (DYNLPSLCEK…KFAFWSLIDP (329 aa)). E490 acts as the Proton donor in catalysis. E598 functions as the Nucleophile in the catalytic mechanism.

Belongs to the glycosyl hydrolase 10 (cellulase F) family.

The enzyme catalyses Endohydrolysis of (1-&gt;4)-beta-D-xylosidic linkages in xylans.. The protein operates within glycan degradation; xylan degradation. This chain is Endo-1,4-beta-xylanase A (xynA), found in Caldicellulosiruptor sp. (strain Rt8B.4).